Consider the following 1203-residue polypeptide: Regulator of telomere elongation helicase 1 (1203 aa).

Positions 7-296 (NGVTVDFPFQ…ARVTQQGELQ (290 aa)) constitute a Helicase ATP-binding domain. 42-49 (SPTGTGKT) serves as a coordination point for ATP. 4 residues coordinate [4Fe-4S] cluster: C145, C163, C172, and C207. Positions 151–167 (KKQESNHMQISLCRKKV) match the Nuclear localization signal motif. The short motif at 250 to 253 (DEAH) is the DEAH box element. Positions 871–877 (QKGGRKK) match the Nuclear localization signal motif. Disordered stretches follow at residues 998–1020 (QLDP…TSKG) and 1120–1203 (TTGK…RSKQ). The span at 1123–1134 (KDLELEGPRDES) shows a compositional bias: basic and acidic residues. The PIP-box motif lies at 1160-1167 (QSKISSFF). Residues 1169–1181 (QRPDESVRSDDTT) are compositionally biased toward basic and acidic residues.

It belongs to the helicase family. RAD3/XPD subfamily. As to quaternary structure, interacts with TERF1. Interacts (via PIP-box) with PCNA; the interaction is direct and essential for suppressing telomere fragility. Interacts with MMS19; the interaction mediates the association of RTEL1 with the cytosolic iron-sulfur protein assembly (CIA) complex.

Its subcellular location is the nucleus. The catalysed reaction is ATP + H2O = ADP + phosphate + H(+). In terms of biological role, a probable ATP-dependent DNA helicase implicated in telomere-length regulation, DNA repair and the maintenance of genomic stability. Acts as an anti-recombinase to counteract toxic recombination and limit crossover during meiosis. Regulates meiotic recombination and crossover homeostasis by physically dissociating strand invasion events and thereby promotes noncrossover repair by meiotic synthesis dependent strand annealing (SDSA) as well as disassembly of D loop recombination intermediates. Also disassembles T loops and prevents telomere fragility by counteracting telomeric G4-DNA structures, which together ensure the dynamics and stability of the telomere. This Mus spretus (Western Mediterranean mouse) protein is Regulator of telomere elongation helicase 1 (Rtel1).